A 107-amino-acid chain; its full sequence is NADH-quinone oxidoreductase subunit K 2 (107 aa).

A run of 3 helical transmembrane segments spans residues 3-23 (LPIY…LWGA), 30-50 (VRIL…LITF), and 67-87 (ILTL…LAII).

This sequence belongs to the complex I subunit 4L family. As to quaternary structure, NDH-1 is composed of 14 different subunits. Subunits NuoA, H, J, K, L, M, N constitute the membrane sector of the complex.

Its subcellular location is the cell membrane. It catalyses the reaction a quinone + NADH + 5 H(+)(in) = a quinol + NAD(+) + 4 H(+)(out). In terms of biological role, NDH-1 shuttles electrons from NADH, via FMN and iron-sulfur (Fe-S) centers, to quinones in the respiratory chain. The immediate electron acceptor for the enzyme in this species is believed to be a menaquinone. Couples the redox reaction to proton translocation (for every two electrons transferred, four hydrogen ions are translocated across the cytoplasmic membrane), and thus conserves the redox energy in a proton gradient. This is NADH-quinone oxidoreductase subunit K 2 from Symbiobacterium thermophilum (strain DSM 24528 / JCM 14929 / IAM 14863 / T).